Reading from the N-terminus, the 143-residue chain is Large ribosomal subunit protein uL13 (143 aa).

It belongs to the universal ribosomal protein uL13 family. As to quaternary structure, part of the 50S ribosomal subunit.

This protein is one of the early assembly proteins of the 50S ribosomal subunit, although it is not seen to bind rRNA by itself. It is important during the early stages of 50S assembly. The chain is Large ribosomal subunit protein uL13 from Thermoanaerobacter pseudethanolicus (strain ATCC 33223 / 39E) (Clostridium thermohydrosulfuricum).